The following is a 431-amino-acid chain: Glutamate-1-semialdehyde 2,1-aminomutase (431 aa).

An N6-(pyridoxal phosphate)lysine modification is found at Lys265.

Belongs to the class-III pyridoxal-phosphate-dependent aminotransferase family. HemL subfamily. Homodimer. Requires pyridoxal 5'-phosphate as cofactor.

It is found in the cytoplasm. The enzyme catalyses (S)-4-amino-5-oxopentanoate = 5-aminolevulinate. It functions in the pathway porphyrin-containing compound metabolism; protoporphyrin-IX biosynthesis; 5-aminolevulinate from L-glutamyl-tRNA(Glu): step 2/2. The sequence is that of Glutamate-1-semialdehyde 2,1-aminomutase from Aliivibrio fischeri (strain MJ11) (Vibrio fischeri).